A 707-amino-acid chain; its full sequence is Alpha-hemolysin translocation ATP-binding protein HlyB (707 aa).

The Peptidase C39 domain maps to 3 to 125 (SCHKIDYGLY…ALYQGHIILI (123 aa)). His-83 is a catalytic residue. The ABC transmembrane type-1 domain occupies 154-436 (FIETLVVSVF…LAQIWQDFQQ (283 aa)). Transmembrane regions (helical) follow at residues 158 to 178 (LVVSVFLQLFALITPLFFQVV), 191 to 211 (LNVITVALSVVVVFEIILSGL), 269 to 289 (ALTSVLDLLFSLIFFAVMWYY), 295 to 315 (LVILFSLPCYAAWSVFISPIL), and 388 to 408 (VMIINLWLGAHLVISGDLSIG). One can recognise an ABC transporter domain in the interval 468–703 (ITFRNIRFRY…PESLYSYLYQ (236 aa)). 502 to 509 (GRSGSGKS) provides a ligand contact to ATP.

The protein belongs to the ABC transporter superfamily. Protein-1 exporter (TC 3.A.1.109) family. Homodimer.

Its subcellular location is the cell inner membrane. Part of the ABC transporter complex HlyBD involved in hemolysin export. Transmembrane domains (TMD) form a pore in the inner membrane and the ATP-binding domain (NBD) is responsible for energy generation. This Escherichia coli protein is Alpha-hemolysin translocation ATP-binding protein HlyB (hlyB).